The primary structure comprises 347 residues: Quinolinate synthase (347 aa).

2 residues coordinate iminosuccinate: His47 and Ser68. Residue Cys113 participates in [4Fe-4S] cluster binding. Iminosuccinate-binding positions include 139-141 (YAN) and Ser156. Cys200 contacts [4Fe-4S] cluster. Iminosuccinate is bound by residues 226–228 (HPE) and Thr243. [4Fe-4S] cluster is bound at residue Cys297.

This sequence belongs to the quinolinate synthase family. Type 1 subfamily. [4Fe-4S] cluster is required as a cofactor.

It is found in the cytoplasm. The catalysed reaction is iminosuccinate + dihydroxyacetone phosphate = quinolinate + phosphate + 2 H2O + H(+). It participates in cofactor biosynthesis; NAD(+) biosynthesis; quinolinate from iminoaspartate: step 1/1. Catalyzes the condensation of iminoaspartate with dihydroxyacetone phosphate to form quinolinate. The chain is Quinolinate synthase from Shigella flexneri.